The primary structure comprises 666 residues: SNARE-interacting protein KEULE (666 aa).

Positions 340–377 (KNKAAQLQGKRDGAELSTRDLQKMVQALPQYSEQIDKL) form a coiled coil. Positions 534–589 (KEDFPCMNDPSPSFHGSTSLSSAASSSQGQAAQSMRSRRTPTWAKPRGSDDGYSSD) are disordered. Over residues 550 to 568 (STSLSSAASSSQGQAAQSM) the composition is skewed to low complexity.

It belongs to the STXBP/unc-18/SEC1 family. In terms of assembly, binds the syntaxin KNOLLE. Interacts with SEC6. In terms of tissue distribution, expressed throughout the plant, both in mitotically active and quiescent cells. Enriched in dividing tissues.

Its subcellular location is the cytoplasm. The protein resides in the membrane. It is found in the cytoskeleton. It localises to the phragmoplast. Its function is as follows. Regulator of vesicle trafficking involved in cytokinesis and root hair development, but not required for cell elongation. The chain is SNARE-interacting protein KEULE (KEU) from Arabidopsis thaliana (Mouse-ear cress).